The following is a 347-amino-acid chain: Quinolinate synthase (347 aa).

H47 and S68 together coordinate iminosuccinate. C113 provides a ligand contact to [4Fe-4S] cluster. Residues 139 to 141 (YAN) and S156 each bind iminosuccinate. C200 contributes to the [4Fe-4S] cluster binding site. Residues 226-228 (HPE) and T243 contribute to the iminosuccinate site. C297 serves as a coordination point for [4Fe-4S] cluster.

The protein belongs to the quinolinate synthase family. Type 1 subfamily. Requires [4Fe-4S] cluster as cofactor.

The protein localises to the cytoplasm. It catalyses the reaction iminosuccinate + dihydroxyacetone phosphate = quinolinate + phosphate + 2 H2O + H(+). It functions in the pathway cofactor biosynthesis; NAD(+) biosynthesis; quinolinate from iminoaspartate: step 1/1. Catalyzes the condensation of iminoaspartate with dihydroxyacetone phosphate to form quinolinate. This chain is Quinolinate synthase, found in Escherichia coli O9:H4 (strain HS).